The sequence spans 358 residues: Vanillin synthase (358 aa).

Residues 1 to 21 form the signal peptide; sequence MARLLLLLVGVLIACAAGARA. The propeptide at 22-140 is activation peptide; the sequence is GSEFLAEDNP…RGNHKLTSAI (119 aa). A glycan (N-linked (GlcNAc...) asparagine) is linked at asparagine 125. Disulfide bonds link cysteine 162-cysteine 205 and cysteine 196-cysteine 238. Cysteine 165 is a catalytic residue. A glycan (N-linked (GlcNAc...) asparagine) is linked at asparagine 254. Cysteine 296 and cysteine 346 form a disulfide bridge. Active-site residues include histidine 305 and asparagine 325.

Belongs to the peptidase C1 family.

The catalysed reaction is (E)-ferulate + H2O = vanillin + acetate. The enzyme catalyses 4-O-beta-D-glucosyl-trans-ferulate + H2O = 4-O-beta-D-glucosyl-vanillin + acetate. It functions in the pathway aromatic compound metabolism; phenylpropanoid biosynthesis. In terms of biological role, involved in the biosynthesis of vanillin and derivative natural products. Catalyzes the double carbon bond cleavage of ferulic acid to vanillin and of respective glucosides. This is Vanillin synthase from Glechoma hederacea (Ground-ivy).